The following is a 233-amino-acid chain: Uridylate kinase (233 aa).

7 to 10 (KISG) provides a ligand contact to ATP. UMP is bound at residue Gly49. ATP is bound by residues Gly50 and Arg54. UMP contacts are provided by residues Asp68 and 129-136 (TGNPFFTT). Positions 156, 162, and 165 each coordinate ATP.

This sequence belongs to the UMP kinase family. Homohexamer.

It localises to the cytoplasm. The catalysed reaction is UMP + ATP = UDP + ADP. It participates in pyrimidine metabolism; CTP biosynthesis via de novo pathway; UDP from UMP (UMPK route): step 1/1. Its activity is regulated as follows. Inhibited by UTP. Functionally, catalyzes the reversible phosphorylation of UMP to UDP. The sequence is that of Uridylate kinase from Neorickettsia sennetsu (strain ATCC VR-367 / Miyayama) (Ehrlichia sennetsu).